A 104-amino-acid chain; its full sequence is MPEADLSILNRVYDIILDRKENYDENSYVCKLLNHRKGMNKILEKVGEESIETILAVRNEDHKEIVSESSDLIFHLLVLLAANNVTLDEIAGELSARHEKMKRD.

It belongs to the PRA-PH family.

It is found in the cytoplasm. It catalyses the reaction 1-(5-phospho-beta-D-ribosyl)-ATP + H2O = 1-(5-phospho-beta-D-ribosyl)-5'-AMP + diphosphate + H(+). It participates in amino-acid biosynthesis; L-histidine biosynthesis; L-histidine from 5-phospho-alpha-D-ribose 1-diphosphate: step 2/9. The sequence is that of Phosphoribosyl-ATP pyrophosphatase (hisE) from Methanosarcina acetivorans (strain ATCC 35395 / DSM 2834 / JCM 12185 / C2A).